The following is a 619-amino-acid chain: Eukaryotic translation initiation factor 3 subunit D (619 aa).

Residues 99–160 are disordered; it reads QKQPHQRGRF…KWGARPPPKI (62 aa). Residues 100–121 show a composition bias toward basic residues; it reads KQPHQRGRFRGNLRNQRGRGRG. Positions 288-302 are RNA gate; the sequence is EFDLLTVNETAIEPP. Positions 588–619 are disordered; the sequence is TPAATETVATATTEATTPTTATKTTAPAAAQK.

Belongs to the eIF-3 subunit D family. As to quaternary structure, component of the eukaryotic translation initiation factor 3 (eIF-3) complex.

It localises to the cytoplasm. Its function is as follows. mRNA cap-binding component of the eukaryotic translation initiation factor 3 (eIF-3) complex, which is involved in protein synthesis of a specialized repertoire of mRNAs and, together with other initiation factors, stimulates binding of mRNA and methionyl-tRNAi to the 40S ribosome. The eIF-3 complex specifically targets and initiates translation of a subset of mRNAs involved in cell proliferation. In the eIF-3 complex, eif3d specifically recognizes and binds the 7-methylguanosine cap of a subset of mRNAs. This is Eukaryotic translation initiation factor 3 subunit D from Aedes aegypti (Yellowfever mosquito).